The chain runs to 319 residues: tRNA uridine(34) hydroxylase (319 aa).

In terms of domain architecture, Rhodanese spans 127 to 221 (KQEDTVIIDA…YGKDPEVQGE (95 aa)). The Cysteine persulfide intermediate role is filled by cysteine 181.

Belongs to the TrhO family.

The enzyme catalyses uridine(34) in tRNA + AH2 + O2 = 5-hydroxyuridine(34) in tRNA + A + H2O. Functionally, catalyzes oxygen-dependent 5-hydroxyuridine (ho5U) modification at position 34 in tRNAs. The sequence is that of tRNA uridine(34) hydroxylase from Bacillus cereus (strain ZK / E33L).